We begin with the raw amino-acid sequence, 85 residues long: Small ribosomal subunit protein bS18 (85 aa).

It belongs to the bacterial ribosomal protein bS18 family. As to quaternary structure, part of the 30S ribosomal subunit. Forms a tight heterodimer with protein bS6.

Its function is as follows. Binds as a heterodimer with protein bS6 to the central domain of the 16S rRNA, where it helps stabilize the platform of the 30S subunit. The polypeptide is Small ribosomal subunit protein bS18 (Hamiltonella defensa subsp. Acyrthosiphon pisum (strain 5AT)).